The primary structure comprises 140 residues: Extracellular globin-1 (140 aa).

The Globin domain occupies 1-140 (ECDVLERFKV…YDFIASGIKP (140 aa)). An intrachain disulfide couples C2 to C130. A heme b-binding site is contributed by H93.

This sequence belongs to the globin family. As to quaternary structure, the giant hemoglobins of worms are formed of a monomeric subunit and a disulfide-bonded trimer. This subunit is monomeric.

It localises to the secreted. This is Extracellular globin-1 from Metaphire hilgendorfi (Earthworm).